We begin with the raw amino-acid sequence, 379 residues long: UDP-N-acetylglucosamine--N-acetylmuramyl-(pentapeptide) pyrophosphoryl-undecaprenol N-acetylglucosamine transferase (379 aa).

UDP-N-acetyl-alpha-D-glucosamine is bound by residues 17–19 (TGG), N128, R169, S197, and Q298.

This sequence belongs to the glycosyltransferase 28 family. MurG subfamily.

It localises to the cell inner membrane. The enzyme catalyses di-trans,octa-cis-undecaprenyl diphospho-N-acetyl-alpha-D-muramoyl-L-alanyl-D-glutamyl-meso-2,6-diaminopimeloyl-D-alanyl-D-alanine + UDP-N-acetyl-alpha-D-glucosamine = di-trans,octa-cis-undecaprenyl diphospho-[N-acetyl-alpha-D-glucosaminyl-(1-&gt;4)]-N-acetyl-alpha-D-muramoyl-L-alanyl-D-glutamyl-meso-2,6-diaminopimeloyl-D-alanyl-D-alanine + UDP + H(+). It functions in the pathway cell wall biogenesis; peptidoglycan biosynthesis. Functionally, cell wall formation. Catalyzes the transfer of a GlcNAc subunit on undecaprenyl-pyrophosphoryl-MurNAc-pentapeptide (lipid intermediate I) to form undecaprenyl-pyrophosphoryl-MurNAc-(pentapeptide)GlcNAc (lipid intermediate II). This Brucella melitensis biotype 2 (strain ATCC 23457) protein is UDP-N-acetylglucosamine--N-acetylmuramyl-(pentapeptide) pyrophosphoryl-undecaprenol N-acetylglucosamine transferase.